The following is a 467-amino-acid chain: Uronate isomerase (467 aa).

This sequence belongs to the metallo-dependent hydrolases superfamily. Uronate isomerase family.

The enzyme catalyses D-glucuronate = D-fructuronate. It catalyses the reaction aldehydo-D-galacturonate = keto-D-tagaturonate. Its pathway is carbohydrate metabolism; pentose and glucuronate interconversion. In Histophilus somni (strain 2336) (Haemophilus somnus), this protein is Uronate isomerase.